The following is a 962-amino-acid chain: Protease 3 (962 aa).

Residues 1–23 form the signal peptide; it reads MPRSTWFKALLLLVALWGPAVQA. Residue H88 coordinates Zn(2+). The Proton acceptor role is filled by E91. 2 residues coordinate Zn(2+): H92 and E169.

The protein belongs to the peptidase M16 family. In terms of assembly, monomer. Requires Zn(2+) as cofactor.

Its subcellular location is the periplasm. It catalyses the reaction Preferential cleavage of 16-Tyr-|-Leu-17 and 25-Phe-|-Tyr-26 bonds of oxidized insulin B chain. Also acts on other substrates of Mw less than 7 kDa such as insulin and glucagon.. Endopeptidase that degrades small peptides of less than 7 kDa, such as glucagon and insulin. The protein is Protease 3 (ptrA) of Salmonella typhi.